We begin with the raw amino-acid sequence, 553 residues long: Chaperonin GroEL 2 (553 aa).

ATP is bound by residues 29–32, 86–90, glycine 414, and aspartate 495; these read TLGP and DGTTT.

This sequence belongs to the chaperonin (HSP60) family. In terms of assembly, forms a cylinder of 14 subunits composed of two heptameric rings stacked back-to-back. Interacts with the co-chaperonin GroES.

The protein resides in the cytoplasm. The catalysed reaction is ATP + H2O + a folded polypeptide = ADP + phosphate + an unfolded polypeptide.. In terms of biological role, together with its co-chaperonin GroES, plays an essential role in assisting protein folding. The GroEL-GroES system forms a nano-cage that allows encapsulation of the non-native substrate proteins and provides a physical environment optimized to promote and accelerate protein folding. This is Chaperonin GroEL 2 from Gloeobacter violaceus (strain ATCC 29082 / PCC 7421).